Reading from the N-terminus, the 212-residue chain is Ribonuclease HII (212 aa).

In terms of domain architecture, RNase H type-2 spans 4-206; it reads EVQCGIDEAG…YKKIKEDVES (203 aa). A divalent metal cation is bound by residues Asp10, Glu11, and Asp103.

The protein belongs to the RNase HII family. Requires Mn(2+) as cofactor. Mg(2+) serves as cofactor.

The protein localises to the cytoplasm. It carries out the reaction Endonucleolytic cleavage to 5'-phosphomonoester.. Functionally, endonuclease that specifically degrades the RNA of RNA-DNA hybrids. The chain is Ribonuclease HII from Thermoplasma volcanium (strain ATCC 51530 / DSM 4299 / JCM 9571 / NBRC 15438 / GSS1).